The sequence spans 372 residues: MAIKVLVVDDSSFFRRRVSEIVNQDPELEVIATASNGAEAVKMAAELNPQVITMDIEMPVMDGITAVREIMAKCPTPILMFSSLTHDGAKATLDALDAGALDFLPKRFEDIATNKDDAILLLQQRVKALGRRRIFRPVVRPTTPTPPPRSSASSVLGGVSTHTQPAPVRSSHAASIRPSGKQYKLLLIGTSTGGPVALQKILTQFPANYPHPILLIQHMPAAFTPAFANRLNGLCKIEVKEAANGDVLRPGCAYLAPGGMQMMVERTGVTGRVKVLAGSAEMNYKPCVDITFASASKAFGGDVLAVVLTGMGADGREGARMLKSAGATIWAQDEASCVVYGMPQAVASAGIATQSISLDNMAESILKESARG.

Residues 4–121 (KVLVVDDSSF…ATNKDDAILL (118 aa)) enclose the Response regulatory domain. Position 55 is a 4-aspartylphosphate (D55). The segment at 138–174 (VVRPTTPTPPPRSSASSVLGGVSTHTQPAPVRSSHAA) is disordered. The CheB-type methylesterase domain occupies 179–372 (SGKQYKLLLI…ESILKESARG (194 aa)). Residues S191, H218, and D314 contribute to the active site.

Belongs to the CheB family. Post-translationally, phosphorylated by CheA. Phosphorylation of the N-terminal regulatory domain activates the methylesterase activity.

Its subcellular location is the cytoplasm. It carries out the reaction [protein]-L-glutamate 5-O-methyl ester + H2O = L-glutamyl-[protein] + methanol + H(+). The catalysed reaction is L-glutaminyl-[protein] + H2O = L-glutamyl-[protein] + NH4(+). Involved in chemotaxis. Part of a chemotaxis signal transduction system that modulates chemotaxis in response to various stimuli. Catalyzes the demethylation of specific methylglutamate residues introduced into the chemoreceptors (methyl-accepting chemotaxis proteins or MCP) by CheR. Also mediates the irreversible deamidation of specific glutamine residues to glutamic acid. This Shewanella sp. (strain MR-4) protein is Protein-glutamate methylesterase/protein-glutamine glutaminase 1.